Consider the following 202-residue polypeptide: Imidazoleglycerol-phosphate dehydratase (202 aa).

This sequence belongs to the imidazoleglycerol-phosphate dehydratase family.

It localises to the cytoplasm. The enzyme catalyses D-erythro-1-(imidazol-4-yl)glycerol 3-phosphate = 3-(imidazol-4-yl)-2-oxopropyl phosphate + H2O. It functions in the pathway amino-acid biosynthesis; L-histidine biosynthesis; L-histidine from 5-phospho-alpha-D-ribose 1-diphosphate: step 6/9. This chain is Imidazoleglycerol-phosphate dehydratase, found in Brucella abortus (strain S19).